Reading from the N-terminus, the 212-residue chain is Probable 2-dehydro-3-deoxy-6-phosphogalactonate aldolase (212 aa).

Position 18 (Arg18) interacts with 2-dehydro-3-deoxy-6-phospho-D-galactonate. Glu41 serves as the catalytic Proton donor/acceptor. Positions 70, 130, 160, 180, and 181 each coordinate 2-dehydro-3-deoxy-6-phospho-D-galactonate. Catalysis depends on Lys130, which acts as the Schiff-base intermediate with substrate.

It belongs to the KHG/KDPG aldolase family. Homotrimer.

The enzyme catalyses 2-dehydro-3-deoxy-6-phospho-D-galactonate = D-glyceraldehyde 3-phosphate + pyruvate. It participates in carbohydrate acid metabolism; D-galactonate degradation; D-glyceraldehyde 3-phosphate and pyruvate from D-galactonate: step 3/3. In terms of biological role, involved in the degradation of galactose via the DeLey-Doudoroff pathway. Catalyzes the reversible, stereospecific retro-aldol cleavage of 2-keto-3-deoxy-6-phosphogalactonate (KDPGal) to pyruvate and D-glyceraldehyde-3-phosphate. The chain is Probable 2-dehydro-3-deoxy-6-phosphogalactonate aldolase (dgoA) from Rhizobium meliloti (strain 1021) (Ensifer meliloti).